Here is a 608-residue protein sequence, read N- to C-terminus: Tectonic-3 (608 aa).

A signal peptide spans 1–22 (MRTPQLALLQVFLLMFPDGVRP). The segment at 23–58 (QPSSSPSGAVPTSLDLQPGTVGGTLQSSSEATATRP) is disordered. Residues 23–586 (QPSSSPSGAV…AFSRGVSSQK (564 aa)) lie on the Extracellular side of the membrane. The span at 45-54 (GTLQSSSEAT) shows a compositional bias: polar residues. 3 N-linked (GlcNAc...) asparagine glycosylation sites follow: N78, N179, and N347. Residues 587-607 (CSVSPVLILCLLLLGVLNLET) traverse the membrane as a helical segment. Position 608 (T608) is a topological domain, cytoplasmic.

The protein belongs to the tectonic family. Part of the tectonic-like complex (also named B9 complex).

The protein resides in the membrane. Its function is as follows. Part of the tectonic-like complex which is required for tissue-specific ciliogenesis and may regulate ciliary membrane composition. May be involved in apoptosis regulation. Necessary for signal transduction through the sonic hedgehog (Shh) signaling pathway. The sequence is that of Tectonic-3 (TCTN3) from Macaca fascicularis (Crab-eating macaque).